A 351-amino-acid chain; its full sequence is Xaa-Pro dipeptidase (351 aa).

The Co(2+) site is built by Asp-212, Asp-223, His-287, Glu-316, and Glu-330.

It belongs to the peptidase M24B family. Archaeal-type prolidase subfamily. In terms of assembly, homodimer. It depends on Co(2+) as a cofactor.

The protein resides in the cytoplasm. The enzyme catalyses Xaa-L-Pro dipeptide + H2O = an L-alpha-amino acid + L-proline. Splits dipeptides with a prolyl in the C-terminal position and a nonpolar amino acid at the N-terminal position. This Pyrococcus horikoshii (strain ATCC 700860 / DSM 12428 / JCM 9974 / NBRC 100139 / OT-3) protein is Xaa-Pro dipeptidase (pepQ).